Here is a 523-residue protein sequence, read N- to C-terminus: Coatomer subunit delta-2 (523 aa).

The interval 218 to 243 is disordered; that stretch reads DSFASKPKGRPSAAATAPGKGLGMKL. Residues 282 to 523 form the MHD domain; the sequence is SDPVTVTIEE…RLVTANYQVV (242 aa).

This sequence belongs to the adaptor complexes medium subunit family. Delta-COP subfamily. In terms of assembly, oligomeric complex that consists of at least the alpha, beta, beta', gamma, delta, epsilon and zeta subunits.

Its subcellular location is the cytoplasm. The protein resides in the golgi apparatus membrane. It localises to the cytoplasmic vesicle. The protein localises to the COPI-coated vesicle membrane. Functionally, the coatomer is a cytosolic protein complex that binds to dilysine motifs and reversibly associates with Golgi non-clathrin-coated vesicles, which further mediate biosynthetic protein transport from the ER, via the Golgi up to the trans Golgi network. Coatomer complex is required for budding from Golgi membranes, and is essential for the retrograde Golgi-to-ER transport of dilysine-tagged proteins. The protein is Coatomer subunit delta-2 of Oryza sativa subsp. japonica (Rice).